A 100-amino-acid polypeptide reads, in one-letter code: Urease subunit gamma (100 aa).

Belongs to the urease gamma subunit family. In terms of assembly, heterotrimer of UreA (gamma), UreB (beta) and UreC (alpha) subunits. Three heterotrimers associate to form the active enzyme.

It localises to the cytoplasm. It catalyses the reaction urea + 2 H2O + H(+) = hydrogencarbonate + 2 NH4(+). The protein operates within nitrogen metabolism; urea degradation; CO(2) and NH(3) from urea (urease route): step 1/1. The sequence is that of Urease subunit gamma from Agrobacterium fabrum (strain C58 / ATCC 33970) (Agrobacterium tumefaciens (strain C58)).